A 244-amino-acid chain; its full sequence is tRNA (guanine-N(7)-)-methyltransferase (244 aa).

Residues 1-10 (MSDTPQSPAQ) show a composition bias toward polar residues. The disordered stretch occupies residues 1 to 20 (MSDTPQSPAQDSLAEHDEAR). S-adenosyl-L-methionine contacts are provided by Glu-74, Glu-99, Asp-126, and Asp-149. The active site involves Asp-149. Residues Lys-153, Asp-185, and 222–225 (TKFE) each bind substrate.

It belongs to the class I-like SAM-binding methyltransferase superfamily. TrmB family.

It carries out the reaction guanosine(46) in tRNA + S-adenosyl-L-methionine = N(7)-methylguanosine(46) in tRNA + S-adenosyl-L-homocysteine. It functions in the pathway tRNA modification; N(7)-methylguanine-tRNA biosynthesis. In terms of biological role, catalyzes the formation of N(7)-methylguanine at position 46 (m7G46) in tRNA. This Pseudomonas aeruginosa (strain ATCC 15692 / DSM 22644 / CIP 104116 / JCM 14847 / LMG 12228 / 1C / PRS 101 / PAO1) protein is tRNA (guanine-N(7)-)-methyltransferase.